A 378-amino-acid chain; its full sequence is Plant intracellular Ras-group-related LRR protein 8 (378 aa).

One can recognise a Ubiquitin-like domain in the interval 10–86; that stretch reads PTITVQVKFG…VMLMASQGLH (77 aa). The tract at residues 85–120 is disordered; that stretch reads LHQGDGPITKNSSVPAPSTRRASNVKEAQIQKSDTN. Residues 93–106 show a composition bias toward polar residues; the sequence is TKNSSVPAPSTRRA. 9 LRR repeats span residues 129–152, 153–176, 178–201, 202–225, 226–250, 252–271, 272–293, 294–317, and 319–344; these read WKAT…VWGC, GSSI…IAAL, SLQK…GLTC, VQTL…LGSI, THLR…LLKH, EILI…IGGC, ESLN…AFGN, LQHL…FFIK, and SQLI…GWEE.

Belongs to the SHOC2 family. In terms of tissue distribution, widely expressed except in panicles.

Functionally, leucine-rich repeat protein that likely mediates protein interactions, possibly in the context of signal transduction. The chain is Plant intracellular Ras-group-related LRR protein 8 (IRL8) from Oryza sativa subsp. japonica (Rice).